The following is a 1248-amino-acid chain: Kinesin-like protein KIN-14I (1248 aa).

The 157-residue stretch at 88–244 folds into the MyTH4 domain; the sequence is FQKDPIPTSL…PAREEIEALL (157 aa). An FERM domain is found at 249-563; that stretch reads LTTIVFFLDE…HINDVMLRRY (315 aa). A coiled-coil region spans residues 586-659; that stretch reads NIEIYEKRVQ…LDKLKSLCDE (74 aa). The interval 675-704 is disordered; sequence ETRLKSGQGQESSNRTGVSGNHFERDTLPT. Polar residues predominate over residues 679-693; it reads KSGQGQESSNRTGVS. Residues 708 to 799 are a coiled coil; it reads VNNSIEMLAK…TRSLNVTEST (92 aa). In terms of domain architecture, Kinesin motor spans 872–1193; the sequence is KIRVFCRLRP…LMYASRVRCI (322 aa). An ATP-binding site is contributed by 953-960; that stretch reads GQTGSGKT. A calmodulin-binding region spans residues 1201 to 1223; that stretch reads VAPKEIMRLKKLIAYWKEQAGKR. Residues 1220-1248 are disordered; the sequence is AGKRSEDDDLEEIQEERTPKEKADNRLTS. Basic and acidic residues predominate over residues 1234–1248; that stretch reads EERTPKEKADNRLTS.

The protein belongs to the TRAFAC class myosin-kinesin ATPase superfamily. Kinesin family. KIN-14 subfamily. Binds microtubules via its N-terminus containing the MyTH4 domain and binds F-actin via its FERM domain. Binding to calmodulin inhibits microtubule binding activity.

The protein resides in the cytoplasm. It is found in the cytoskeleton. Its function is as follows. Minus-end microtubule-dependent motor protein involved in the regulation of cell division. The sequence is that of Kinesin-like protein KIN-14I from Oryza sativa subsp. japonica (Rice).